Reading from the N-terminus, the 144-residue chain is Alpha-crystallin (144 aa).

Residues 33-143 enclose the sHSP domain; it reads PTFDTRLMRL…TEKHIQIRST (111 aa).

The protein belongs to the small heat shock protein (HSP20) family.

It localises to the secreted. It is found in the cell wall. The protein resides in the cytoplasm. Functionally, acts as a chaperone. This Mycobacterium bovis (strain ATCC BAA-935 / AF2122/97) protein is Alpha-crystallin (hspX).